Here is a 439-residue protein sequence, read N- to C-terminus: Xylose isomerase (439 aa).

Residues histidine 101 and aspartate 104 contribute to the active site. Mg(2+) is bound by residues glutamate 232, glutamate 268, histidine 271, aspartate 296, aspartate 307, aspartate 309, and aspartate 339.

Belongs to the xylose isomerase family. In terms of assembly, homotetramer. Requires Mg(2+) as cofactor.

Its subcellular location is the cytoplasm. It catalyses the reaction alpha-D-xylose = alpha-D-xylulofuranose. In Histophilus somni (strain 2336) (Haemophilus somnus), this protein is Xylose isomerase.